Here is a 283-residue protein sequence, read N- to C-terminus: Bifunctional protein FolD (283 aa).

NADP(+) contacts are provided by residues 166 to 168 (GAS) and Ile232.

It belongs to the tetrahydrofolate dehydrogenase/cyclohydrolase family. Homodimer.

It carries out the reaction (6R)-5,10-methylene-5,6,7,8-tetrahydrofolate + NADP(+) = (6R)-5,10-methenyltetrahydrofolate + NADPH. The enzyme catalyses (6R)-5,10-methenyltetrahydrofolate + H2O = (6R)-10-formyltetrahydrofolate + H(+). The protein operates within one-carbon metabolism; tetrahydrofolate interconversion. Functionally, catalyzes the oxidation of 5,10-methylenetetrahydrofolate to 5,10-methenyltetrahydrofolate and then the hydrolysis of 5,10-methenyltetrahydrofolate to 10-formyltetrahydrofolate. The protein is Bifunctional protein FolD of Mannheimia succiniciproducens (strain KCTC 0769BP / MBEL55E).